The following is a 327-amino-acid chain: Flotillin-like protein FloA (327 aa).

A helical transmembrane segment spans residues 2 to 22 (IGLIIIVVIVLVALLLLFSFV). Positions 305–327 (ADTGMRNSINQRTNQKDDESPDK) are disordered. Over residues 318–327 (NQKDDESPDK) the composition is skewed to basic and acidic residues.

It belongs to the flotillin-like FloA family. In terms of assembly, homooligomerizes.

The protein resides in the cell membrane. Its subcellular location is the membrane raft. Functionally, found in functional membrane microdomains (FMM) that may be equivalent to eukaryotic membrane rafts. FMMs are highly dynamic and increase in number as cells age. Flotillins are thought to be important factors in membrane fluidity. In Staphylococcus saprophyticus subsp. saprophyticus (strain ATCC 15305 / DSM 20229 / NCIMB 8711 / NCTC 7292 / S-41), this protein is Flotillin-like protein FloA.